Here is a 309-residue protein sequence, read N- to C-terminus: MTAHSLIDAIRAAAPDLRGRLLENQSLADLTWFRVGGPAQVLFSPADEADLSAFLAALDPSVPVTVIGLGSNLIVRDGGIPGVTIRLGGKAFGSVEIDGETIRSGTAVPDMRLAKAAAEASLDGLAFFRGIPGSVGGALRMNAGAHGGETTDVLVEVRGIDRKGEVHRFTHAEMGFRYRHSSAPDDVIFTGATFRGRPGDREAIEAEMERVTAAREAAQPIRERTGGSTFKNPEGGKAWQLIDAAGCRGLIRGGAQVSEMHCNFLINRGGATAADIEGLGEEVRRRVREHSGFELHWEIKRIGVEASPA.

In terms of domain architecture, FAD-binding PCMH-type spans arginine 34–isoleucine 221. Arginine 179 is a catalytic residue. Serine 228 serves as the catalytic Proton donor. Residue glutamate 298 is part of the active site.

This sequence belongs to the MurB family. The cofactor is FAD.

It localises to the cytoplasm. The catalysed reaction is UDP-N-acetyl-alpha-D-muramate + NADP(+) = UDP-N-acetyl-3-O-(1-carboxyvinyl)-alpha-D-glucosamine + NADPH + H(+). It participates in cell wall biogenesis; peptidoglycan biosynthesis. Functionally, cell wall formation. The protein is UDP-N-acetylenolpyruvoylglucosamine reductase of Methylorubrum extorquens (strain CM4 / NCIMB 13688) (Methylobacterium extorquens).